A 290-amino-acid polypeptide reads, in one-letter code: L-fucono-1,5-lactonase (290 aa).

This sequence belongs to the metallo-dependent hydrolases superfamily.

It catalyses the reaction L-fucono-1,5-lactone + H2O = L-fuconate + H(+). The catalysed reaction is L-fucono-1,4-lactone + H2O = L-fuconate + H(+). It carries out the reaction D-arabinono-1,4-lactone + H2O = D-arabinonate + H(+). The enzyme catalyses L-xylono-1,4-lactone + H2O = L-xylonate + H(+). It catalyses the reaction L-galactono-1,4-lactone + H2O = L-galactonate + H(+). Catalyzes the hydrolysis of L-fucono-1,5-lactone to L-fuconate. Can also hydrolyze L-fucono-1,4-lactone, L-galactono-1,4-lactone D-arabinono-1,4-lactone and L-xylono-1,4-lactone. The sequence is that of L-fucono-1,5-lactonase from Burkholderia ambifaria (strain ATCC BAA-244 / DSM 16087 / CCUG 44356 / LMG 19182 / AMMD) (Burkholderia cepacia (strain AMMD)).